A 315-amino-acid polypeptide reads, in one-letter code: Protein FRA10AC1 homolog (315 aa).

Methionine 1 carries the N-acetylmethionine modification. Residues 1–28 (MHGHGGYDSDFSDDEQGGGSSKKRKKTV) form a disordered region. Residues serine 9 and serine 12 each carry the phosphoserine modification. An N6-acetyllysine modification is found at lysine 36. Positions 225-235 (KEIKSTKKRSK) are enriched in basic residues. A disordered region spans residues 225–308 (KEIKSTKKRS…EKSQEEEFDD (84 aa)). Basic and acidic residues predominate over residues 236–245 (TKTESDESPH). 2 positions are modified to phosphoserine: serine 251 and serine 252. The segment covering 257-279 (SQGKDEGHSSSKRSEDSRNRNAG) has biased composition (basic and acidic residues). Residues serine 283 and serine 285 each carry the phosphoserine modification.

As to quaternary structure, interacts with ESS2.

The protein resides in the nucleus. Its function is as follows. May be involved in pre-mRNA splicing. The protein is Protein FRA10AC1 homolog (Fra10ac1) of Rattus norvegicus (Rat).